We begin with the raw amino-acid sequence, 271 residues long: Adenosylcobinamide-GDP ribazoletransferase (271 aa).

Helical transmembrane passes span 4–24 (FLLALRTTFGFLSTIPVGMSM), 35–55 (YLQTFAGIVLGSMIGIFAYLT), 58–78 (FLPSTISAVLIMVFIYYITGL), 108–128 (SLGIGGVSYTVLALIALYASI), 135–155 (VLFFSDNAALIIAISLLIAEI), 192–212 (FVLGALVCVLAFGTLGIIGYI), and 246–266 (IIVLMVLTVAITAVNNGYGGL).

This sequence belongs to the CobS family. The cofactor is Mg(2+).

It localises to the cell membrane. It catalyses the reaction alpha-ribazole + adenosylcob(III)inamide-GDP = adenosylcob(III)alamin + GMP + H(+). The enzyme catalyses alpha-ribazole 5'-phosphate + adenosylcob(III)inamide-GDP = adenosylcob(III)alamin 5'-phosphate + GMP + H(+). Its pathway is cofactor biosynthesis; adenosylcobalamin biosynthesis; adenosylcobalamin from cob(II)yrinate a,c-diamide: step 7/7. Functionally, joins adenosylcobinamide-GDP and alpha-ribazole to generate adenosylcobalamin (Ado-cobalamin). Also synthesizes adenosylcobalamin 5'-phosphate from adenosylcobinamide-GDP and alpha-ribazole 5'-phosphate. The sequence is that of Adenosylcobinamide-GDP ribazoletransferase from Methanococcoides burtonii (strain DSM 6242 / NBRC 107633 / OCM 468 / ACE-M).